The chain runs to 293 residues: Diaminopimelate epimerase (293 aa).

Substrate is bound by residues N15, Q47, and N67. C76 acts as the Proton donor in catalysis. Residues 77-78, N163, N197, and 215-216 contribute to the substrate site; these read GN and ER. The active-site Proton acceptor is C224. Residue 225–226 participates in substrate binding; it reads GS.

It belongs to the diaminopimelate epimerase family. Homodimer.

Its subcellular location is the cytoplasm. The enzyme catalyses (2S,6S)-2,6-diaminopimelate = meso-2,6-diaminopimelate. The protein operates within amino-acid biosynthesis; L-lysine biosynthesis via DAP pathway; DL-2,6-diaminopimelate from LL-2,6-diaminopimelate: step 1/1. Its function is as follows. Catalyzes the stereoinversion of LL-2,6-diaminopimelate (L,L-DAP) to meso-diaminopimelate (meso-DAP), a precursor of L-lysine and an essential component of the bacterial peptidoglycan. The sequence is that of Diaminopimelate epimerase from Chelativorans sp. (strain BNC1).